The chain runs to 547 residues: MQVRFGRRSGQAKESQGMDCFEKEEIPYPPLLPSKVDLQQITIIPHAEWERIRDSLNRLTREAAVLRAERAAKKKMHVKSQELVKHWTNTYAGMKEQKLKAKQKRDEEIEAERKVLDLEEEIYKEGERKKAIESARQCQFHQTERVKRFHSGLLLSRVMKERDVQIQYKKNAVKSDKKWEEQVKLNDEKAFKEDQEKEEKRRRERVALAEDHLKQIEEHKEEEEARKKSEEKDAEEMKRQNLLYEIEMKKNLSKKQEEIDTNRKLLLDNMHNKNIIRAVEQQQQEEEDEKIRKFIKAKKRLIQMRMDKDAETHRLMEERRERINNFLSKLIKEKLDTEDLIIARDISEADAELEKREKEKHEKNQADLKAIAEYRASVMKNKEEEERQRKIEAKEQLQAVLKADKIFQELEKEKSLKVTREKLEIQDAHIQQIAINKYNAKQMKEEELDYWRLTDALTVEKEKEFEKYAREVINFESESTKKYAYPMVKAVQEGVGGGRGPPFVGRGGIRPSYQATDATGVQLPCFKSQGSKYNDFQKSKRRLGFTW.

3 coiled-coil regions span residues 50–131 (ERIR…RKKA), 183–251 (VKLN…MKKN), and 342–405 (IARD…KADK). The interval 214–237 (KQIEEHKEEEEARKKSEEKDAEEM) is disordered.

Microtubule inner protein component of sperm flagellar doublet microtubules.

Its subcellular location is the cytoplasm. It is found in the cytoskeleton. It localises to the cilium axoneme. The protein resides in the flagellum axoneme. Microtubule inner protein (MIP) part of the dynein-decorated doublet microtubules (DMTs) in cilia axoneme, which is required for motile cilia beating. The chain is Cilia- and flagella- associated protein 210 (Cfap210) from Mus musculus (Mouse).